A 2235-amino-acid polypeptide reads, in one-letter code: Bridge-like lipid transfer protein family member 2 (2235 aa).

The signal sequence occupies residues 1 to 31 (MPLFFSALLVLLLVALSALFLGRWLVVRLAT). The transmembrane domain stretch occupies residues 29 to 108 (LATKWCQRKL…LQKVSDLSAP (80 aa)). S563 carries the phosphoserine modification. N-linked (GlcNAc...) asparagine glycosylation occurs at N730. The disordered stretch occupies residues 1495–1529 (PQMPAKKPKRGVPTSASAPPRVNTPSFSGQPDKGS). A coiled-coil region spans residues 1813 to 1885 (SILHLQEAVR…LNILIRCFKD (73 aa)). Residues S1846, S2090, and S2094 each carry the phosphoserine modification. A disordered region spans residues 2074-2099 (GKGVAQGLTRSSGVRRSFRKSPEHPV).

Belongs to the SABRE family. Expressed in pancreas, placenta and up-regulated in breast carcinoma epithelial cells, ductal in situ carcinoma (DCIS), invasive breast carcinoma (IBC) and metastatic breast carcinoma cells (MET).

It localises to the cell membrane. Its subcellular location is the endoplasmic reticulum membrane. The protein resides in the mitochondrion membrane. Tube-forming lipid transport protein which binds to phosphatidylinositols and affects phosphatidylinositol-4,5-bisphosphate (PtdIns-4,5-P2) distribution. The chain is Bridge-like lipid transfer protein family member 2 from Homo sapiens (Human).